Consider the following 318-residue polypeptide: Trans-prenyltransferase (318 aa).

Residues 1–21 (MLHLIYISIIVVLIIILISYT) traverse the membrane as a helical segment. The isopentenyl diphosphate site is built by Lys-85, Arg-88, and His-122. Mg(2+) contacts are provided by Asp-129 and Asp-135. Arg-140 is a dimethylallyl diphosphate binding site. Arg-141 is a binding site for isopentenyl diphosphate. Dimethylallyl diphosphate contacts are provided by Lys-216, Thr-217, and Gln-254.

Belongs to the FPP/GGPP synthase family. Asfivirus trans-prenyltransferase subfamily. Requires Mg(2+) as cofactor.

The protein resides in the host endoplasmic reticulum. It is found in the host membrane. It carries out the reaction isopentenyl diphosphate + dimethylallyl diphosphate = (2E)-geranyl diphosphate + diphosphate. It catalyses the reaction isopentenyl diphosphate + (2E)-geranyl diphosphate = (2E,6E)-farnesyl diphosphate + diphosphate. The catalysed reaction is isopentenyl diphosphate + (2E,6E)-farnesyl diphosphate = (2E,6E,10E)-geranylgeranyl diphosphate + diphosphate. The enzyme catalyses isopentenyl diphosphate + (2E,6E,10E)-geranylgeranyl diphosphate = (2E,6E,10E,14E)-geranylfarnesyl diphosphate + diphosphate. It participates in isoprenoid biosynthesis; farnesyl diphosphate biosynthesis; farnesyl diphosphate from geranyl diphosphate and isopentenyl diphosphate: step 1/1. Its pathway is isoprenoid biosynthesis; geranyl diphosphate biosynthesis; geranyl diphosphate from dimethylallyl diphosphate and isopentenyl diphosphate: step 1/1. The protein operates within isoprenoid biosynthesis; geranylgeranyl diphosphate biosynthesis; geranylgeranyl diphosphate from farnesyl diphosphate and isopentenyl diphosphate: step 1/1. Functionally, trans-prenyltransferase that catalyzes the sequential condensation of isopentenyl diphosphate (IPP) with different allylic diphosphates, such as dimethylallyl diphosphate (DMAPP), geranyl diphosphate (GPP), farnesyl diphosphate (FPP) and geranylgeranyl diphosphate (GGPP), farnesyl diphosphate being the best allylic substrate. This African swine fever virus (strain Badajoz 1971 Vero-adapted) (Ba71V) protein is Trans-prenyltransferase.